Here is a 235-residue protein sequence, read N- to C-terminus: Ubiquinone/menaquinone biosynthesis C-methyltransferase UbiE (235 aa).

Positions 59, 84, and 123 each coordinate S-adenosyl-L-methionine.

The protein belongs to the class I-like SAM-binding methyltransferase superfamily. MenG/UbiE family.

It catalyses the reaction a 2-demethylmenaquinol + S-adenosyl-L-methionine = a menaquinol + S-adenosyl-L-homocysteine + H(+). The catalysed reaction is a 2-methoxy-6-(all-trans-polyprenyl)benzene-1,4-diol + S-adenosyl-L-methionine = a 5-methoxy-2-methyl-3-(all-trans-polyprenyl)benzene-1,4-diol + S-adenosyl-L-homocysteine + H(+). It participates in quinol/quinone metabolism; menaquinone biosynthesis; menaquinol from 1,4-dihydroxy-2-naphthoate: step 2/2. Its pathway is cofactor biosynthesis; ubiquinone biosynthesis. Functionally, methyltransferase required for the conversion of demethylmenaquinol (DMKH2) to menaquinol (MKH2) and the conversion of 2-polyprenyl-6-methoxy-1,4-benzoquinol (DDMQH2) to 2-polyprenyl-3-methyl-6-methoxy-1,4-benzoquinol (DMQH2). This is Ubiquinone/menaquinone biosynthesis C-methyltransferase UbiE from Campylobacter jejuni subsp. jejuni serotype O:2 (strain ATCC 700819 / NCTC 11168).